A 249-amino-acid chain; its full sequence is Uridylate kinase (249 aa).

An ATP-binding site is contributed by 15 to 18 (KLSG). The interval 23 to 28 (GDEGFG) is involved in allosteric activation by GTP. Residue glycine 57 participates in UMP binding. ATP-binding residues include glycine 58 and arginine 62. Residues aspartate 77 and 138–145 (TGNPFFTT) each bind UMP. ATP contacts are provided by threonine 165, tyrosine 171, and aspartate 174.

This sequence belongs to the UMP kinase family. In terms of assembly, homohexamer.

It is found in the cytoplasm. The enzyme catalyses UMP + ATP = UDP + ADP. It participates in pyrimidine metabolism; CTP biosynthesis via de novo pathway; UDP from UMP (UMPK route): step 1/1. Allosterically activated by GTP. Inhibited by UTP. In terms of biological role, catalyzes the reversible phosphorylation of UMP to UDP. In Pseudoalteromonas translucida (strain TAC 125), this protein is Uridylate kinase.